The following is a 1098-amino-acid chain: Probable arabinosyltransferase B (1098 aa).

12 helical membrane-spanning segments follow: residues 28–50 (WVAT…LPVV), 217–239 (LKLL…LWRL), 271–293 (ASWR…WHVI), 402–419 (LRPE…YVLI), 434–456 (AVVT…AALV), 472–494 (LVGT…TVVF), 541–558 (FGFL…FIML), 570–587 (PAWR…FLMF), 597–619 (GLFA…PSVL), 626–648 (MAFL…GWWY), 663–685 (IDGI…YAAW), and 698–720 (LIRA…VFVA).

The protein belongs to the emb family.

It is found in the cell membrane. Functionally, arabinosyl transferase responsible for the polymerization of arabinose into the arabinan of arabinogalactan. This chain is Probable arabinosyltransferase B (embB), found in Mycobacterium bovis (strain ATCC BAA-935 / AF2122/97).